Consider the following 173-residue polypeptide: Small ribosomal subunit protein uS11m (173 aa).

This sequence belongs to the universal ribosomal protein uS11 family.

Its subcellular location is the mitochondrion. The polypeptide is Small ribosomal subunit protein uS11m (RPS11) (Acanthamoeba castellanii (Amoeba)).